Reading from the N-terminus, the 356-residue chain is Putative aminopeptidase FrvX (356 aa).

H61 and D175 together coordinate a divalent metal cation. Catalysis depends on E205, which acts as the Proton acceptor. 3 residues coordinate a divalent metal cation: E206, D228, and H316.

This sequence belongs to the peptidase M42 family. Requires a divalent metal cation as cofactor.

The polypeptide is Putative aminopeptidase FrvX (frvX) (Escherichia coli (strain K12)).